We begin with the raw amino-acid sequence, 317 residues long: Heme A synthase (317 aa).

The Cytoplasmic segment spans residues 1–6 (MQRSLK). A helical transmembrane segment spans residues 7–27 (WFASATTLAMLFVLIGGALVT). Residues 28-62 (KTGSGMGCGRSWPLCNGQWVPDHITPELIIELSHR) lie on the Extracellular side of the membrane. A disulfide bridge links Cys35 with Cys42. Glu58 is an active-site residue. Residue His61 coordinates heme o. A helical membrane pass occupies residues 63–83 (LVSGLAGIMVLILSIWAWRAI). Residues 84–90 (GHVQETK) are Cytoplasmic-facing. A helical membrane pass occupies residues 91–111 (FLAVISFVFLVLQGLIGAAAV). Over 112–121 (VWGQSDFVLA) the chain is Extracellular. A helical membrane pass occupies residues 122–142 (LHFGISLISFAAVLLLTLLIF). His123 contributes to the heme o binding site. The Cytoplasmic portion of the chain corresponds to 143–159 (EIDKTFSAASLSLDGKM). A helical transmembrane segment spans residues 160 to 180 (RFHIYGITIYSYIVVYTGALV). Residues 181–211 (RHTNASLACPSWPLCAKTRLLPVQFHEWVQM) are Extracellular-facing. An intrachain disulfide couples Cys189 to Cys195. Residues 212 to 232 (GHRLAAAVIIIWIAAAAIHAV) traverse the membrane as a helical segment. Residue His213 coordinates heme b. Over 233–243 (RHYRRQPVIYY) the chain is Cytoplasmic. A helical transmembrane segment spans residues 244–264 (GWLIALLLVLAQMTTGALVVF). At 265-270 (TQLNLY) the chain is on the extracellular side. A helical membrane pass occupies residues 271 to 291 (IALAHAFFISCLFGVLSYLLL). Position 275 (His275) interacts with heme b. At 292-317 (LALRTRRAPVKAADHSAGEAAPATLK) the chain is on the cytoplasmic side.

This sequence belongs to the COX15/CtaA family. Type 1 subfamily. Interacts with CtaB. The cofactor is heme b.

It localises to the cell membrane. The catalysed reaction is Fe(II)-heme o + 2 A + H2O = Fe(II)-heme a + 2 AH2. The protein operates within porphyrin-containing compound metabolism; heme A biosynthesis; heme A from heme O: step 1/1. In terms of biological role, catalyzes the conversion of heme O to heme A by two successive hydroxylations of the methyl group at C8. The first hydroxylation forms heme I, the second hydroxylation results in an unstable dihydroxymethyl group, which spontaneously dehydrates, resulting in the formyl group of heme A. This chain is Heme A synthase, found in Geobacillus kaustophilus (strain HTA426).